The following is a 117-amino-acid chain: MDWTWRVFCLLAVAPGAHSQVQLVQSGAEVKKPGASVKVSCKASGYTFTSYYMHWVRQAPGQGLEWMGIINPSGGSTSYAQKFQGRVTMTRDTSTSTVYMELSSLRSEDTAVYYCAR.

The signal sequence occupies residues 1–19 (MDWTWRVFCLLAVAPGAHS). Positions 20 to 44 (QVQLVQSGAEVKKPGASVKVSCKAS) are framework-1. One can recognise an Ig-like domain in the interval 20-117 (QVQLVQSGAE…EDTAVYYCAR (98 aa)). Cys-41 and Cys-115 are oxidised to a cystine. The interval 45-52 (GYTFTSYY) is complementarity-determining-1. The segment at 53–69 (MHWVRQAPGQGLEWMGI) is framework-2. The segment at 70 to 77 (INPSGGST) is complementarity-determining-2. The framework-3 stretch occupies residues 78 to 115 (SYAQKFQGRVTMTRDTSTSTVYMELSSLRSEDTAVYYC). The interval 116–117 (AR) is complementarity-determining-3.

In terms of assembly, immunoglobulins are composed of two identical heavy chains and two identical light chains; disulfide-linked.

The protein localises to the secreted. The protein resides in the cell membrane. V region of the variable domain of immunoglobulin heavy chains that participates in the antigen recognition. Immunoglobulins, also known as antibodies, are membrane-bound or secreted glycoproteins produced by B lymphocytes. In the recognition phase of humoral immunity, the membrane-bound immunoglobulins serve as receptors which, upon binding of a specific antigen, trigger the clonal expansion and differentiation of B lymphocytes into immunoglobulins-secreting plasma cells. Secreted immunoglobulins mediate the effector phase of humoral immunity, which results in the elimination of bound antigens. The antigen binding site is formed by the variable domain of one heavy chain, together with that of its associated light chain. Thus, each immunoglobulin has two antigen binding sites with remarkable affinity for a particular antigen. The variable domains are assembled by a process called V-(D)-J rearrangement and can then be subjected to somatic hypermutations which, after exposure to antigen and selection, allow affinity maturation for a particular antigen. The chain is Immunoglobulin heavy variable 1-46 from Homo sapiens (Human).